Reading from the N-terminus, the 80-residue chain is Cytochrome c oxidase subunit 7A1, mitochondrial (80 aa).

A mitochondrion-targeting transit peptide spans 1 to 21 (MRALRVSQALVRSFSSTARNR). Residues 22–46 (FENRVAEKQKLFQEDNGLPVHLKGG) lie on the Mitochondrial matrix side of the membrane. The chain crosses the membrane as a helical span at residues 47–75 (ATDNILYRVTMTLCLGGTLYSLYCLGWAS). Residues 76–80 (FPHKK) lie on the Mitochondrial intermembrane side of the membrane.

The protein belongs to the cytochrome c oxidase VIIa family. In terms of assembly, component of the complex IV (CIV, cytochrome c oxidase), a multisubunit enzyme composed of 14 subunits. The complex is composed of a catalytic core of 3 subunits MT-CO1, MT-CO2 and MT-CO3, encoded in the mitochondrial DNA, and 11 supernumerary subunits COX4I1 (or COX4I2), COX5A, COX5B, COX6A2 (or COX6A1), COX6B1 (or COX6B2), COX6C, COX7A1 (or COX7A2), COX7B, COX7C, COX8B and NDUFA4, which are encoded in the nuclear genome. The complex exists as a monomer or a dimer and forms supercomplexes (SCs) in the inner mitochondrial membrane with NADH-ubiquinone oxidoreductase (complex I, CI) and ubiquinol-cytochrome c oxidoreductase (cytochrome b-c1 complex, complex III, CIII), resulting in different assemblies (supercomplex SCI(1)III(2)IV(1) and megacomplex MCI(2)III(2)IV(2)).

It is found in the mitochondrion inner membrane. Its pathway is energy metabolism; oxidative phosphorylation. Its function is as follows. Component of the mitochondrial respiratory complex IV (CIV, also named cytochrome c oxidase complex), the last enzyme in the mitochondrial electron transport chain which drives oxidative phosphorylation. The CIV complex is the component of the respiratory chain that catalyzes the reduction of oxygen to water. Acts as an assembly factor that specifically drives the homodimerization of CIV complexes, mediating the formation of mitochondrial respiratory supercomplexes (respirasomes) containing two CIV: supercomplxes with two molecules of CIV show improved activity. Despite being highly expressed in brown adipose tissue, not required for thermogenesis. The sequence is that of Cytochrome c oxidase subunit 7A1, mitochondrial (COX7A1) from Bos taurus (Bovine).